We begin with the raw amino-acid sequence, 379 residues long: RING finger protein 215 (379 aa).

2 disordered regions span residues M1–P21 and A44–R63. Residues M1 to P24 lie on the Cytoplasmic side of the membrane. A helical membrane pass occupies residues L25–A45. Topologically, residues D46–P252 are extracellular. N-linked (GlcNAc...) asparagine glycosylation occurs at N188. The chain crosses the membrane as a helical span at residues L253 to V273. The Cytoplasmic portion of the chain corresponds to Q274 to D379. The RING-type; atypical zinc finger occupies C327–K368.

The protein localises to the membrane. The sequence is that of RING finger protein 215 (Rnf215) from Mus musculus (Mouse).